The sequence spans 105 residues: D-galactoside-specific lectin (105 aa).

The SUEL-type lectin domain maps to 13–103; it reads VCEDSSLTIS…KYLAVTYICS (91 aa).

As to quaternary structure, homodimer; disulfide-linked.

The protein resides in the cytoplasm. Its function is as follows. This protein binds D-galactoside. May have an important role in the activation of eggs (triggered by fertilization), or in their subsequent differentiation. The dimeric form is essential for hemagglutination activity. The polypeptide is D-galactoside-specific lectin (Heliocidaris crassispina (Sea urchin)).